We begin with the raw amino-acid sequence, 121 residues long: Large ribosomal subunit protein bL20c (121 aa).

Belongs to the bacterial ribosomal protein bL20 family.

It localises to the plastid. Its subcellular location is the chloroplast. In terms of biological role, binds directly to 23S ribosomal RNA and is necessary for the in vitro assembly process of the 50S ribosomal subunit. It is not involved in the protein synthesizing functions of that subunit. The chain is Large ribosomal subunit protein bL20c from Lotus japonicus (Lotus corniculatus var. japonicus).